A 401-amino-acid polypeptide reads, in one-letter code: Subtilisin-like protease 7 (401 aa).

The signal sequence occupies residues M1–G20. A propeptide spanning residues A21 to N119 is cleaved from the precursor. An Inhibitor I9 domain is found at K36 to I118. An N-linked (GlcNAc...) asparagine glycan is attached at N58. The region spanning S129–M401 is the Peptidase S8 domain. Catalysis depends on charge relay system residues D161 and H193. 2 N-linked (GlcNAc...) asparagine glycosylation sites follow: N223 and N253. Residue S347 is the Charge relay system of the active site. N397 carries N-linked (GlcNAc...) asparagine glycosylation.

It belongs to the peptidase S8 family.

Its subcellular location is the secreted. Functionally, secreted subtilisin-like serine protease with keratinolytic activity that contributes to pathogenicity. This Trichophyton equinum (Horse ringworm fungus) protein is Subtilisin-like protease 7 (SUB7).